We begin with the raw amino-acid sequence, 2664 residues long: Inositol 1,4,5-trisphosphate-gated calcium channel ITPR3 (2664 aa).

Topologically, residues 1–2227 (MSEMSSFLHI…YVEGASTGVL (2227 aa)) are cytoplasmic. MIR domains are found at residues 113-173 (GDVV…LRSN), 174-224 (GDNV…INLF), 232-288 (EEVL…VEVV), 295-372 (GGAG…LDPT), and 378-434 (DSFV…IVSV). Residues R266, T268, L269, and R270 each coordinate 1D-myo-inositol 1,4,5-trisphosphate. Positions 320-344 (NPSYKGDASDPKAAGTGAQGRTGRR) are disordered. 6 residues coordinate 1D-myo-inositol 1,4,5-trisphosphate: R503, K507, R510, Y567, R568, and K569. Ca(2+) is bound at residue R743. A phosphoserine mark is found at S909 and S927. Residues E1115 and E1118 each contribute to the Ca(2+) site. 2 disordered regions span residues 1124–1158 (KGAS…GEKS) and 1790–1850 (QQET…VGER). Polar residues predominate over residues 1792 to 1805 (ETKSTVAVNMSDLG). S1806, S1825, and S1827 each carry phosphoserine. Ca(2+) contacts are provided by E1875 and E1939. ATP-binding residues include A1989, E2142, and K2145. Residues 2228 to 2248 (GSPLISLLFWILICFSIAALF) form a helical membrane-spanning segment. At 2249–2256 (TKRYSVRP) the chain is on the extracellular side. Residues 2257–2277 (LIVALILRSIYYLGIGPTLNI) traverse the membrane as a helical segment. Residues 2278–2286 (LGALNLTNK) lie on the Cytoplasmic side of the membrane. Residues 2287 to 2304 (IVFVVSFVGNRGTFIRGY) traverse the membrane as a helical segment. Topologically, residues 2305-2318 (KAMVMDMEFLYHVG) are extracellular. A helical transmembrane segment spans residues 2319–2339 (YILTSVLGLFAHELFYSILLF). At 2340–2361 (DLIYREETLFNVIKSVTRNGRS) the chain is on the cytoplasmic side. Residues 2362-2382 (ILLTALLALILVYLFSIVGFL) traverse the membrane as a helical segment. The Extracellular portion of the chain corresponds to 2383–2489 (FLKDDFILEV…ESLFPARVVY (107 aa)). A disulfide bridge connects residues C2448 and C2454. The chain crosses the membrane as a helical span at residues 2490–2510 (DLLFFFIVIIIVLNLIFGVII). At 2511-2664 (DTFADLRSEK…FVDVQNCMSR (154 aa)) the chain is on the cytoplasmic side. Residues C2531 and F2532 each coordinate ATP. Residue C2531 coordinates Zn(2+). Residues C2534 and H2551 each contribute to the Zn(2+) site. Positions 2553, 2556, 2557, and 2558 each coordinate ATP. Position 2556 (H2556) interacts with Zn(2+). Ca(2+) is bound at residue T2574. Phosphoserine is present on residues S2602 and S2663.

This sequence belongs to the InsP3 receptor family. In terms of assembly, homotetramer. Homodimer. Interacts with TRPC1, TRPC3 and TRPC4. Interacts with TRPV4. Interacts with SIGMAR1. Interacts with PML and AKT1. Interacts with IRAG2 (via coiled-coil domain). Interacts with CABP1. Interacts with TMBIM4/LFG4. Interacts with CEMIP. Interacts with TESPA1. Interacts with TMEM203. Interacts with BOK; regulates ITPR3 expression. Interacts with BCL2L10. Interacts with CHGA and CHGB. Post-translationally, phosphorylated by AKT1 on serine and/or threonine residues.

It is found in the endoplasmic reticulum membrane. The protein localises to the cytoplasmic vesicle. It localises to the secretory vesicle membrane. It catalyses the reaction Ca(2+)(in) = Ca(2+)(out). Its activity is regulated as follows. Inositol 1,4,5-trisphosphate-gated calcium channel is regulated by cytosolic calcium in a biphasic manner. At low concentrations, cytosolic calcium binds at a high-affinity juxtamembrane domain (JD) calcium binding site, allowing ITPR3 to activate by escaping a low-energy resting state through an ensemble of preactivated states. At high cytosolic calcium concentrations, ITPR3 preferentially enters an inhibited state stabilized by calcium binding at a second, low-affinity cytoplasmic domain (CD) calcium binding site. In terms of biological role, inositol 1,4,5-trisphosphate-gated calcium channel that, upon 1D-myo-inositol 1,4,5-trisphosphate binding, transports calcium from the endoplasmic reticulum lumen to cytoplasm, thus releasing the intracellular calcium and therefore participates in cellular calcium ion homeostasis. 1D-myo-inositol 1,4,5-trisphosphate binds to the ligand-free channel without altering its global conformation, yielding the low-energy resting state, then progresses through resting-to preactivated transitions to the higher energy preactivated state, which increases affinity for calcium, promoting binding of the low basal cytosolic calcium at the juxtamembrane domain (JD) site, favoring the transition through the ensemble of high-energy intermediate states along the trajectory to the fully-open activated state. Upon opening, releases calcium in the cytosol where it can bind to the low-affinity cytoplasmic domain (CD) site and stabilizes the inhibited state to terminate calcium release. The polypeptide is Inositol 1,4,5-trisphosphate-gated calcium channel ITPR3 (Bos taurus (Bovine)).